We begin with the raw amino-acid sequence, 366 residues long: Succinyl-diaminopimelate desuccinylase (366 aa).

Histidine 66 is a binding site for Zn(2+). Aspartate 68 is a catalytic residue. Position 97 (aspartate 97) interacts with Zn(2+). Glutamate 127 (proton acceptor) is an active-site residue. Zn(2+) is bound by residues glutamate 128, glutamate 156, and histidine 341.

Belongs to the peptidase M20A family. DapE subfamily. Homodimer. Zn(2+) is required as a cofactor. It depends on Co(2+) as a cofactor.

It carries out the reaction N-succinyl-(2S,6S)-2,6-diaminopimelate + H2O = (2S,6S)-2,6-diaminopimelate + succinate. The protein operates within amino-acid biosynthesis; L-lysine biosynthesis via DAP pathway; LL-2,6-diaminopimelate from (S)-tetrahydrodipicolinate (succinylase route): step 3/3. In terms of biological role, catalyzes the hydrolysis of N-succinyl-L,L-diaminopimelic acid (SDAP), forming succinate and LL-2,6-diaminopimelate (DAP), an intermediate involved in the bacterial biosynthesis of lysine and meso-diaminopimelic acid, an essential component of bacterial cell walls. This Aliarcobacter butzleri (strain RM4018) (Arcobacter butzleri) protein is Succinyl-diaminopimelate desuccinylase.